The following is a 305-amino-acid chain: UDP-3-O-acyl-N-acetylglucosamine deacetylase (305 aa).

Zn(2+)-binding residues include histidine 79, histidine 238, and aspartate 242. Catalysis depends on histidine 265, which acts as the Proton donor.

It belongs to the LpxC family. Zn(2+) is required as a cofactor.

It catalyses the reaction a UDP-3-O-[(3R)-3-hydroxyacyl]-N-acetyl-alpha-D-glucosamine + H2O = a UDP-3-O-[(3R)-3-hydroxyacyl]-alpha-D-glucosamine + acetate. The protein operates within glycolipid biosynthesis; lipid IV(A) biosynthesis; lipid IV(A) from (3R)-3-hydroxytetradecanoyl-[acyl-carrier-protein] and UDP-N-acetyl-alpha-D-glucosamine: step 2/6. Its function is as follows. Catalyzes the hydrolysis of UDP-3-O-myristoyl-N-acetylglucosamine to form UDP-3-O-myristoylglucosamine and acetate, the committed step in lipid A biosynthesis. This is UDP-3-O-acyl-N-acetylglucosamine deacetylase from Haemophilus influenzae (strain 86-028NP).